We begin with the raw amino-acid sequence, 318 residues long: Methionyl-tRNA formyltransferase (318 aa).

113–116 (SLLP) serves as a coordination point for (6S)-5,6,7,8-tetrahydrofolate.

Belongs to the Fmt family.

The catalysed reaction is L-methionyl-tRNA(fMet) + (6R)-10-formyltetrahydrofolate = N-formyl-L-methionyl-tRNA(fMet) + (6S)-5,6,7,8-tetrahydrofolate + H(+). Attaches a formyl group to the free amino group of methionyl-tRNA(fMet). The formyl group appears to play a dual role in the initiator identity of N-formylmethionyl-tRNA by promoting its recognition by IF2 and preventing the misappropriation of this tRNA by the elongation apparatus. The chain is Methionyl-tRNA formyltransferase from Hahella chejuensis (strain KCTC 2396).